Consider the following 333-residue polypeptide: MHKSNCFDTARLVAAMMVLVSHHYALSGQPEPYLFGFESAGGIAVIIFFSISGYLISKSAIRSDSFIDFMAKRARRIFPALVPCSILTYFLFGWILNDFSAEYFSHDIVRKTISSIFMSQAPDADITSHLIHAGINGSLWTLPLEFLCYIITGVAVAHLKNGKAFIVILLVFVSLSLIGSVSENRDVMFSIPLWLYPLRGLAFFFGATMAMYEKSWNVSNVKITVVSLLAMYAYASYGKGIDYTMTCYILVSFSTIAICTSVGDPLVKGRFDYSYGVYIYAFPVQQVVINTLHMGFYPSMLLSAVTVLFLSHLSWNLVEKRFLTRSSPKLSLD.

It belongs to the acyltransferase 3 family.

The protein localises to the host cell inner membrane. Antigenically converts S.flexneri serotype X to 3a, Y to 3b, 1a to 1b and 4a to 4b by O-acetylating the O-antigenic polysaccharide chain. This is O-acetyl transferase (OAC) from Shigella flexneri (Shigella flexneri bacteriophage VI).